Here is a 489-residue protein sequence, read N- to C-terminus: Rhamnulokinase (489 aa).

13–17 serves as a coordination point for ATP; that stretch reads ASSGR. Cysteine 68 and cysteine 222 are oxidised to a cystine. Substrate contacts are provided by residues glycine 83 and 236–238; that span reads HDT. Aspartate 237 acts as the Proton acceptor in catalysis. Threonine 259 is a binding site for ATP. Residue asparagine 296 coordinates substrate. ATP is bound at residue glutamine 304. Cysteine 353 and cysteine 370 are oxidised to a cystine. Glycine 402 provides a ligand contact to ATP. A disulfide bond links cysteine 413 and cysteine 417.

This sequence belongs to the rhamnulokinase family. Mg(2+) serves as cofactor.

The catalysed reaction is L-rhamnulose + ATP = L-rhamnulose 1-phosphate + ADP + H(+). It functions in the pathway carbohydrate degradation; L-rhamnose degradation; glycerone phosphate from L-rhamnose: step 2/3. Functionally, involved in the catabolism of L-rhamnose (6-deoxy-L-mannose). Catalyzes the transfer of the gamma-phosphate group from ATP to the 1-hydroxyl group of L-rhamnulose to yield L-rhamnulose 1-phosphate. The chain is Rhamnulokinase from Salmonella typhimurium (strain LT2 / SGSC1412 / ATCC 700720).